The sequence spans 325 residues: Eukaryotic translation initiation factor 3 subunit I (325 aa).

WD repeat units lie at residues 8 to 47 (GHERSITQIKYNREGDLLFTVAKDPIVNVWYSVNGERLGT), 50 to 89 (GHTGAVWCVDADWDTRHVLTGSADNSCRLWDCETGKQLAL), 144 to 183 (CSDSKITSAVWGPLGEFIIAGHENGELNQFSAKSGEQLSN), 186 to 225 (EHTKQINDIQTSRDMTMFITASKDNTAKLFDCTSLKHLKT), and 283 to 324 (GHFG…FEFE).

Belongs to the eIF-3 subunit I family. Component of the eukaryotic translation initiation factor 3 (eIF-3) complex, which is composed of 13 subunits: EIF3A, EIF3B, EIF3C, EIF3D, EIF3E, EIF3F, EIF3G, EIF3H, EIF3I, EIF3J, EIF3K, EIF3L and EIF3M.

The protein resides in the cytoplasm. In terms of biological role, component of the eukaryotic translation initiation factor 3 (eIF-3) complex, which is involved in protein synthesis of a specialized repertoire of mRNAs and, together with other initiation factors, stimulates binding of mRNA and methionyl-tRNAi to the 40S ribosome. The eIF-3 complex specifically targets and initiates translation of a subset of mRNAs involved in cell proliferation. The protein is Eukaryotic translation initiation factor 3 subunit I of Taeniopygia guttata (Zebra finch).